Here is an 851-residue protein sequence, read N- to C-terminus: Transcriptional regulator RFX1 (851 aa).

Polar residues-rich tracts occupy residues 1-11 (MSSDQTPQNRN) and 20-34 (PRLQQQTSQIPSTGP). Disordered stretches follow at residues 1 to 121 (MSSD…EPHP), 134 to 170 (QSQFQFDYSSPYIGQSQSQSQSQSQAQPQPHPQPQTY), and 195 to 230 (HEASSADNDSATNITTPQKRKKQKRSESVTPNTGEN). Over residues 38–53 (QQRERSQEQESDHEHQ) the composition is skewed to basic and acidic residues. Positions 54 to 84 (QAQQHLHQFQQSNLTPSTTAFPSSTSIPTFS) are enriched in low complexity. Polar residues predominate over residues 85-114 (KQDQGYHNQFSSPQSSYRKIGNFAQSSNAP). Over residues 141–170 (YSSPYIGQSQSQSQSQSQAQPQPHPQPQTY) the composition is skewed to low complexity. Residues 199 to 211 (SADNDSATNITTP) are compositionally biased toward polar residues. The RFX-type winged-helix DNA-binding region spans 282 to 357 (GMVWLLNSCD…YHYCGIKLTG (76 aa)). 2 disordered regions span residues 368-411 (YQQK…SVSY) and 783-806 (PPSLSSLPQTQQQNPVIQEETGTQ). A compositionally biased stretch (polar residues) spans 384–393 (AQVGSSTSSA). Residues 783 to 797 (PPSLSSLPQTQQQNP) show a composition bias toward low complexity.

The protein belongs to the RFX family.

The protein localises to the nucleus. In terms of biological role, transcription factor involved in DNA damage responses, morphogenesis, and virulence. The chain is Transcriptional regulator RFX1 (RFX1) from Candida albicans (strain SC5314 / ATCC MYA-2876) (Yeast).